Reading from the N-terminus, the 174-residue chain is Nucleoside-triphosphatase THEP1 (174 aa).

Residues 7–14 and 98–105 contribute to the ATP site; these read GRPGSGKS and CIIIDEIG.

This sequence belongs to the THEP1 NTPase family.

It carries out the reaction a ribonucleoside 5'-triphosphate + H2O = a ribonucleoside 5'-diphosphate + phosphate + H(+). Has nucleotide phosphatase activity towards ATP, GTP, CTP, TTP and UTP. May hydrolyze nucleoside diphosphates with lower efficiency. In Methanothermobacter thermautotrophicus (strain ATCC 29096 / DSM 1053 / JCM 10044 / NBRC 100330 / Delta H) (Methanobacterium thermoautotrophicum), this protein is Nucleoside-triphosphatase THEP1.